A 224-amino-acid chain; its full sequence is Myogenin (224 aa).

Phosphoserine; by CaMK2G is present on residues serine 77 and serine 79. One can recognise a bHLH domain in the interval 81–132 (DRRRAATLREKRRLKKVNEAFEALKRSTLLNPNQRLPKVEILRSAIQYIERL). Residue threonine 87 is modified to Phosphothreonine; by CaMK2G.

As to quaternary structure, homodimer and heterodimer with E12; heterodimerization enhances MYOG DNA-binding and transcriptional activities. Interacts with SMARCA4/BRG1/BAF190A. Interacts (via C-terminal region) with SSRP1 and SUPT16H; the interaction is indicative of an interaction with the FACT complex. Interacts with CSRP3. In terms of processing, phosphorylated by CAMK2G on threonine and serine amino acids in a muscle activity-dependent manner. Phosphorylation of Thr-87 impairs both DNA-binding and trans-activation functions in contracting muscles.

It localises to the nucleus. In terms of biological role, acts as a transcriptional activator that promotes transcription of muscle-specific target genes and plays a role in muscle differentiation, cell cycle exit and muscle atrophy. Essential for the development of functional embryonic skeletal fiber muscle differentiation. However is dispensable for postnatal skeletal muscle growth; phosphorylation by CAMK2G inhibits its transcriptional activity in respons to muscle activity. Required for the recruitment of the FACT complex to muscle-specific promoter regions, thus promoting gene expression initiation. During terminal myoblast differentiation, plays a role as a strong activator of transcription at loci with an open chromatin structure previously initiated by MYOD1. Together with MYF5 and MYOD1, co-occupies muscle-specific gene promoter core regions during myogenesis. Also cooperates with myocyte-specific enhancer factor MEF2D and BRG1-dependent recruitment of SWI/SNF chromatin-remodeling enzymes to alter chromatin structure at myogenic late gene promoters. Facilitates cell cycle exit during terminal muscle differentiation through the up-regulation of miR-20a expression, which in turn represses genes involved in cell cycle progression. Binds to the E-box containing (E1) promoter region of the miR-20a gene. Also plays a role in preventing reversal of muscle cell differentiation. Contributes to the atrophy-related gene expression in adult denervated muscles. Induces fibroblasts to differentiate into myoblasts. The polypeptide is Myogenin (MYOG) (Bos taurus (Bovine)).